We begin with the raw amino-acid sequence, 390 residues long: Small ribosomal subunit protein uS9m (390 aa).

The interval 368-390 is disordered; it reads PRIRERKKPGQEGARRKFTWKKR.

It belongs to the universal ribosomal protein uS9 family. In terms of assembly, component of the mitochondrial ribosome small subunit (28S) which comprises a 12S rRNA and about 30 distinct proteins.

It localises to the mitochondrion. The sequence is that of Small ribosomal subunit protein uS9m (Mrps9) from Mus musculus (Mouse).